We begin with the raw amino-acid sequence, 258 residues long: GCN5-related N-acetyltransferase 2, chloroplastic (258 aa).

The N-terminal 58 residues, 1–58 (MLLIPISSSSSSSISPPPNSYPSNHHSLFFSNLTFPIQHGSRKLKTLRLRANFWESIR), are a transit peptide targeting the chloroplast. An interaction with begomoviruses NSP protein region spans residues 107–194 (IIFSSGGEID…DHAFNATIWD (88 aa)). The N-acetyltransferase domain occupies 107–258 (IIFSSGGEID…GIKGMFWYPK (152 aa)). Residues 195–197 (VLV), 203–208 (GQGLGK), 231–233 (DSQ), and tyrosine 238 each bind acetyl-CoA. The Proton donor role is filled by tyrosine 238.

The protein belongs to the acetyltransferase family. GNAT subfamily. Oligomer. Interacts with begomoviruses NSP but not with CP. This interaction may allow NSP to recruit NSI monomers to acetylate viral genome-bound CP and thus regulate nuclear export of viral genome by NSP. In terms of processing, S-sulfhydrated and activated by hydrogen sulfide H(2)S to promote melatonin accumulation and subsequent melatonin-dependent stomotal closure to combat osmotic stress. Post-translationally, autoacetylated. Highly expressed in cauline leaves and seeds, at lower levels in stems, siliques, inflorescences and rosettes leaves and at very low levels in roots. Expressed in the xylem parenchyma and phloem of the leaves and root, and in guard cells of young leaves.

Its subcellular location is the plastid. It localises to the chloroplast. It catalyses the reaction 5-methoxytryptamine + acetyl-CoA = melatonin + CoA + H(+). The catalysed reaction is L-lysyl-[histone] + acetyl-CoA = N(6)-acetyl-L-lysyl-[histone] + CoA + H(+). The enzyme catalyses L-lysyl-[protein] + acetyl-CoA = N(6)-acetyl-L-lysyl-[protein] + CoA + H(+). It carries out the reaction serotonin + acetyl-CoA = N-acetylserotonin + CoA + H(+). It catalyses the reaction N-terminal L-alanyl-[protein] + acetyl-CoA = N-terminal N(alpha)-acetyl-L-alanyl-[protein] + CoA + H(+). The catalysed reaction is N-terminal L-seryl-[protein] + acetyl-CoA = N-terminal N(alpha)-acetyl-L-seryl-[protein] + CoA + H(+). The enzyme catalyses N-terminal L-valyl-[protein] + acetyl-CoA = N-terminal N(alpha)-acetyl-L-valyl-[protein] + CoA + H(+). It carries out the reaction N-terminal glycyl-[protein] + acetyl-CoA = N-terminal N(alpha)-acetylglycyl-[protein] + CoA + H(+). It catalyses the reaction an N-terminal L-alpha-aminoacyl-[protein] + acetyl-CoA = N-terminal N(alpha)-acetyl-L-alpha-aminoacyl-[protein] + CoA + H(+). The catalysed reaction is N-terminal L-threonyl-[protein] + acetyl-CoA = N-terminal N(alpha)-acetyl-L-threonyl-[protein] + CoA + H(+). The enzyme catalyses N-terminal L-methionyl-[protein] + acetyl-CoA = N-terminal N(alpha)-acetyl-L-methionyl-[protein] + CoA + H(+). It carries out the reaction N-terminal L-leucyl-[protein] + acetyl-CoA = N-terminal N(alpha)-acetyl-L-leucyl-[protein] + CoA + H(+). With respect to regulation, inhibited by the viral nuclear shuttle protein (NSP) that binds to the region required for oligomerization. Its function is as follows. Protein acetyltransferase with dual specificity triggering both N-alpha-acetylation (NTA), with a preference for alanine, serine, threonine, methionine and to a lower extent valine as substrates (can also use glycine and leucine), and epsilon-lysine acetylation (KA) of several plastid proteins. Triggers lysine acetylation in KEA1 and KEA2. Acetylates in vitro histones H2A and H3. Does not act as a transcriptional activator but required for the dynamic reorganization of thylakoid protein complexes and grana during photosynthetic state transitions. Involved in melatonin biosynthesis by catalyzing the formation of N-acetylserotonin (NAS) from serotonin and of melatonin (N-acetyl-5-methoxytryptamine) from 5-methoxytryptamine (5-MT). By triggering melatonin biosynthesis, contributes to the chloroplast protein quality control (CPQC), which plays a pivotal role in starch synthesis, and confers melatonin-associated tolerance to high light (HL) stress. Prevents the accumulation of oil and anthocyanin content in mature seeds and avoids seed germination in a melatonin-dependent manner, but promotes mucilage production in the seed coat. Contributes to melatonin-mediated anthocyanin production in cold-exposed seedlings. Implicated in melatonin-monitored circadian dynamics of stomatal aperture to minimize night water loss and promote drought tolerance, partly by triggering hydrogen sulfide H(2)S-dependent stomotal closure in response to osmotic stress. In terms of biological role, (Microbial infection) Required for begomovirus infection and systemic spread. In case of begomoviruses infection, acetylates the capsid protein (CP), but not the nuclear shuttle protein (NSP). Stimulates melatonin-triggered defense responses to the necrotrophic Botrytis cinerea. This Arabidopsis thaliana (Mouse-ear cress) protein is GCN5-related N-acetyltransferase 2, chloroplastic.